Here is a 434-residue protein sequence, read N- to C-terminus: Monodehydroascorbate reductase 1, peroxisomal (434 aa).

FAD-binding positions include 13 to 16, Glu40, Arg47, Lys52, Ile95, and 146 to 147; these read GGVS and RE. NAD(+) contacts are provided by residues 171–177, Glu195, Arg201, and Gly260; that span reads GGYIGLE. 173–177 provides a ligand contact to NADP(+); it reads YIGLE. Residues Arg201 and Gly260 each coordinate NADP(+). Asp297 provides a ligand contact to FAD. Residue 313–314 participates in NAD(+) binding; the sequence is EH. Residue 313-314 coordinates NADP(+); that stretch reads EH. Residue Val315 coordinates FAD. Arg319 serves as a coordination point for L-ascorbate. An FAD-binding site is contributed by Tyr348. Residue Tyr348 participates in NAD(+) binding. An NADP(+)-binding site is contributed by Tyr348. Residue Arg350 participates in L-ascorbate binding. Ser416 carries the post-translational modification Phosphoserine.

This sequence belongs to the FAD-dependent oxidoreductase family. It depends on FAD as a cofactor.

It localises to the peroxisome matrix. The enzyme catalyses 2 monodehydro-L-ascorbate radical + NADH + H(+) = 2 L-ascorbate + NAD(+). Its function is as follows. Catalyzes the conversion of monodehydroascorbate to ascorbate, oxidizing NADH in the process. The chain is Monodehydroascorbate reductase 1, peroxisomal from Arabidopsis thaliana (Mouse-ear cress).